We begin with the raw amino-acid sequence, 739 residues long: Protein kinase C (739 aa).

A C2 domain is found at methionine 1 to valine 117. 2 consecutive Phorbol-ester/DAG-type zinc fingers follow at residues glycine 176 to cysteine 226 and proline 251 to cysteine 301. In terms of domain architecture, Protein kinase spans phenylalanine 408 to phenylalanine 665. ATP contacts are provided by residues leucine 414–valine 422 and lysine 437. The active-site Proton acceptor is the aspartate 532. Residues alanine 666–lysine 737 form the AGC-kinase C-terminal domain.

It belongs to the protein kinase superfamily. AGC Ser/Thr protein kinase family. PKC subfamily.

It carries out the reaction L-seryl-[protein] + ATP = O-phospho-L-seryl-[protein] + ADP + H(+). The catalysed reaction is L-threonyl-[protein] + ATP = O-phospho-L-threonyl-[protein] + ADP + H(+). PKC is activated by diacylglycerol which in turn phosphorylates a range of cellular proteins. PKC also serves as the receptor for phorbol esters, a class of tumor promoters. The chain is Protein kinase C (Pkc98E) from Drosophila melanogaster (Fruit fly).